A 295-amino-acid chain; its full sequence is ATP synthase gamma chain (295 aa).

Belongs to the ATPase gamma chain family. As to quaternary structure, F-type ATPases have 2 components, CF(1) - the catalytic core - and CF(0) - the membrane proton channel. CF(1) has five subunits: alpha(3), beta(3), gamma(1), delta(1), epsilon(1). CF(0) has three main subunits: a, b and c.

The protein resides in the cell membrane. Its function is as follows. Produces ATP from ADP in the presence of a proton gradient across the membrane. The gamma chain is believed to be important in regulating ATPase activity and the flow of protons through the CF(0) complex. The protein is ATP synthase gamma chain of Desulforudis audaxviator (strain MP104C).